Here is a 388-residue protein sequence, read N- to C-terminus: Flap endonuclease 1 (388 aa).

The tract at residues Met-1–Arg-104 is N-domain. Mg(2+) is bound at residue Asp-34. Residues Arg-47 and Arg-70 each coordinate DNA. Positions 86, 158, 160, 179, and 181 each coordinate Mg(2+). Residues Glu-122 to Tyr-253 form an I-domain region. DNA is bound at residue Glu-158. Residues Gly-231 and Asp-233 each contribute to the DNA site. Asp-233 provides a ligand contact to Mg(2+). The interaction with PCNA stretch occupies residues Thr-336–Phe-344. Positions Pro-351 to Lys-388 are disordered.

It belongs to the XPG/RAD2 endonuclease family. FEN1 subfamily. As to quaternary structure, interacts with PCNA. Three molecules of FEN1 bind to one PCNA trimer with each molecule binding to one PCNA monomer. PCNA stimulates the nuclease activity without altering cleavage specificity. The cofactor is Mg(2+). In terms of processing, phosphorylated. Phosphorylation upon DNA damage induces relocalization to the nuclear plasma.

The protein localises to the nucleus. It localises to the nucleolus. Its subcellular location is the nucleoplasm. It is found in the mitochondrion. Structure-specific nuclease with 5'-flap endonuclease and 5'-3' exonuclease activities involved in DNA replication and repair. During DNA replication, cleaves the 5'-overhanging flap structure that is generated by displacement synthesis when DNA polymerase encounters the 5'-end of a downstream Okazaki fragment. It enters the flap from the 5'-end and then tracks to cleave the flap base, leaving a nick for ligation. Also involved in the long patch base excision repair (LP-BER) pathway, by cleaving within the apurinic/apyrimidinic (AP) site-terminated flap. Acts as a genome stabilization factor that prevents flaps from equilibrating into structures that lead to duplications and deletions. Also possesses 5'-3' exonuclease activity on nicked or gapped double-stranded DNA, and exhibits RNase H activity. Also involved in replication and repair of rDNA and in repairing mitochondrial DNA. This is Flap endonuclease 1 from Drosophila mojavensis (Fruit fly).